Consider the following 254-residue polypeptide: Probable pectate lyase E (254 aa).

Residues Met-1–Ala-17 form the signal peptide. Residue Asn-175 is glycosylated (N-linked (GlcNAc...) asparagine). The tract at residues Asp-228–Cys-254 is disordered.

The protein belongs to the polysaccharide lyase 3 family. The cofactor is Ca(2+).

The protein localises to the secreted. The catalysed reaction is Eliminative cleavage of (1-&gt;4)-alpha-D-galacturonan to give oligosaccharides with 4-deoxy-alpha-D-galact-4-enuronosyl groups at their non-reducing ends.. Its function is as follows. Pectinolytic enzyme consist of four classes of enzymes: pectin lyase, polygalacturonase, pectin methylesterase and rhamnogalacturonase. Among pectinolytic enzymes, pectin lyase is the most important in depolymerization of pectin, since it cleaves internal glycosidic bonds of highly methylated pectins. Favors pectate, the anion, over pectin, the methyl ester. This chain is Probable pectate lyase E (plyE), found in Aspergillus fumigatus (strain ATCC MYA-4609 / CBS 101355 / FGSC A1100 / Af293) (Neosartorya fumigata).